The chain runs to 1480 residues: MSHSMSSSSSSSSSSSSSRDEGQSRLNNVLSNIAKQCRTTSAQVQDVYPCTPLQQGLFALSLTSPGAYMAQHVFRLQPFVDQGRMKQAWNVVLQKHAILRTRIVMLGENAMQVVLKQSPEWRNCSDLRAYLDADQSITLQTGEPLTRWAISDTHLVWSAHHSVYDGFSVELILRDVATAYADGEIPPRPSFRQFIQRMFQQKQKSLTEAYWKKKTAHLDEVDTFPRLPASTYRPRPNSVYKHESSLAIDGPSGVTLSTIANAAWGLVQSSHLGSEQVSFGTTLSGRNANMPDIDKVVGPTLATVPVLLDVRSSQSVADFLQATQAYFTELIPHQHIGLQNLRRLNRATEAVCNFQTLFAFQPGMTETQGQSPYGHLLTAENKDKVEAAFYSYALTFQCSLAGTGIIKVLASYDDKIISSSQMKRLVFQFEHIVSQLISSNGSKRLSEIQLISPQDLDQLDIWKRKMESYEQLLPLDAIQRHIDTRPDATAVAAWDGTLSYVELDAFATRLATWLVHEQKVGPEIVIPICFDRSQWMIVSIFGVLKAGGAFLLLDPIYPENRLRYMIKMVNARTILVSESCRARFEGVPGAILAVNAAWFETHTHASIPMRELPVDRALYLVFTSGSTGQPKGVIVTHASYAASAAGHMPALGMNENTRQLFFASPAFDLSIYEILGSLMCGGTVCVPTEEDRNGSVAPVIRDMNVNLISLTSSYARHLRPEDVPRLETLALVGEPLARDVQRVWANRLTLINAYGPAECSVVSTVKRPVTLDSNPANIGTTVAGRAWVVHPKDHEILLPIGATGELLLEGDHLARGYLNDEEKTAAAYIFGPYWAPSPTPRRFYKTGDLVHFDEDGSIVFEGRKDSQVKIRGQRVEIAEIEHHLARLFPNAAGAAVDVFKHEYHVHLVAFLFCDKESWNSSDTPADILQRLGDVNVSTMSHIKQQLEQVMPHHMVPTRYQIWARMPTSLAGKLDRKALRKELGNQSTTVIELDETSTEFPVIDSTNKVALRLNHKILDLASEEKTTLDGRDFPLSILGLDSIQLITIVTFIRSEYGAKMTVETLYDLKLTVTGLAAMITSPHDRPAEAAPTLDLSKELQRVYRELTRRSESIKHKRKVFLTGATGLLGSQILRQLLADPSVQRVIVHVRANDAAKGMARVVSAATLAKWWSSSYANRVECWPGDLGMPQLGLQPEQWRMLCGTADAGAPITSVIHNGAAVQWQAPYQALKAVNVDSTVELLTAMAQWSEPGSFTFVSGGLKRSPGQDLESFMKSLEQANGYSQSKFVAEELVSRFAGHQSTHRVSIVRPGWVIGTEKDAVPNTDDFLWKLVQACIQIGAYPAEGGDLWLAVADAEEVATRILATTFAASGESPSVDNVEIGTTVSRFWELIKVQTGMELTQMSAEDWKQAAQDFAASQESEQTFLPVLAMLQDPQMEFGVQRPANGGPPSNVNAAIRSNIKTLVETGFLSDSSEVVIVED.

A compositionally biased stretch (low complexity) spans 1-17 (MSHSMSSSSSSSSSSSS). The tract at residues 1-24 (MSHSMSSSSSSSSSSSSSRDEGQS) is disordered. Residues 44 to 458 (VQDVYPCTPL…QLISPQDLDQ (415 aa)) form a condensation region. Positions 479–871 (QRHIDTRPDA…GRKDSQVKIR (393 aa)) are adenylation. Residues 1003–1082 (DSTNKVALRL…GLAAMITSPH (80 aa)) form the Carrier domain. An O-(pantetheine 4'-phosphoryl)serine modification is found at Ser-1041. The interval 1117–1436 (KVFLTGATGL…VLAMLQDPQM (320 aa)) is thioesterase (TE) domain.

Belongs to the NRP synthetase family.

The protein operates within secondary metabolite biosynthesis. Its function is as follows. Nonribosomal peptide synthetase; part of the inp gene cluster that mediates the biosynthesis of fellutamide B, a mycotoxin that acts as a proteasome inhibitor. In the first step of fellutabmide B biosynthesis, inpC activates 3-hydroxydodecanoic acid to generate 3-hydroxydodecanoyl-AMP that is then loaded onto the T0 domain of inpB. The 3-hydroxydodecanoyl-S-phosphopantetheinyl-T0 is sequentially extended with L-Asn and L-Gln by the two CAT modules of inpB. The linear lipodipeptide from inpB is then transferred onto inpA for the addition of the third amino acid, L-Leu. Reductive releasing of the lipotripeptide by the TE domain of inpA produces (2S)-fellutamide B. InpF might be involved in the release and transfer of the lipodipeptide from inpB to inpA. The inp cluster-encoded proteasome subunit inpE confers resistance to internally produced fellutamides. The MFS efflux transporter inpD may contribute to fellutamide resistance as well. This is Nonribosomal peptide synthetase inpA from Emericella nidulans (strain FGSC A4 / ATCC 38163 / CBS 112.46 / NRRL 194 / M139) (Aspergillus nidulans).